The following is a 141-amino-acid chain: Nucleoside diphosphate kinase (141 aa).

ATP is bound by residues Lys11, Phe59, Arg87, Thr93, Arg104, and Asn114. The Pros-phosphohistidine intermediate role is filled by His117.

It belongs to the NDK family. In terms of assembly, homotetramer. Requires Mg(2+) as cofactor.

The protein localises to the cytoplasm. The catalysed reaction is a 2'-deoxyribonucleoside 5'-diphosphate + ATP = a 2'-deoxyribonucleoside 5'-triphosphate + ADP. The enzyme catalyses a ribonucleoside 5'-diphosphate + ATP = a ribonucleoside 5'-triphosphate + ADP. Its function is as follows. Major role in the synthesis of nucleoside triphosphates other than ATP. The ATP gamma phosphate is transferred to the NDP beta phosphate via a ping-pong mechanism, using a phosphorylated active-site intermediate. This chain is Nucleoside diphosphate kinase, found in Mannheimia succiniciproducens (strain KCTC 0769BP / MBEL55E).